The sequence spans 520 residues: Cholesterol side-chain cleavage enzyme, mitochondrial (520 aa).

The N-terminal 39 residues, 1–39 (MLARGLPFRSALVKACPPLLNTGREGWGHHRVGTGEGAG), are a transit peptide targeting the mitochondrion. Residues 27-47 (WGHHRVGTGEGAGISTRTPRP) form a disordered region. Position 461 (Cys461) interacts with heme.

This sequence belongs to the cytochrome P450 family. As to quaternary structure, interacts with FDX1/adrenodoxin. The cofactor is heme.

It localises to the mitochondrion inner membrane. The enzyme catalyses 6 reduced [adrenodoxin] + cholesterol + 3 O2 + 6 H(+) = 4-methylpentanal + pregnenolone + 6 oxidized [adrenodoxin] + 4 H2O. It catalyses the reaction 2 reduced [adrenodoxin] + cholesterol + O2 + 2 H(+) = (22R)-hydroxycholesterol + 2 oxidized [adrenodoxin] + H2O. It carries out the reaction (22R)-hydroxycholesterol + 2 reduced [adrenodoxin] + O2 + 2 H(+) = (20R,22R)-20,22-dihydroxycholesterol + 2 oxidized [adrenodoxin] + H2O. The catalysed reaction is (20R,22R)-20,22-dihydroxycholesterol + 2 reduced [adrenodoxin] + O2 + 2 H(+) = 4-methylpentanal + pregnenolone + 2 oxidized [adrenodoxin] + 2 H2O. It participates in lipid metabolism; C21-steroid hormone metabolism. It functions in the pathway steroid metabolism; cholesterol metabolism. Its function is as follows. A cytochrome P450 monooxygenase that catalyzes the side-chain hydroxylation and cleavage of cholesterol to pregnenolone, the precursor of most steroid hormones. Catalyzes three sequential oxidation reactions of cholesterol, namely the hydroxylation at C22 followed with the hydroxylation at C20 to yield 20R,22R-hydroxycholesterol that is further cleaved between C20 and C22 to yield the C21-steroid pregnenolone and 4-methylpentanal. Mechanistically, uses molecular oxygen inserting one oxygen atom into a substrate and reducing the second into a water molecule. Two electrons are provided by NADPH via a two-protein mitochondrial transfer system comprising flavoprotein FDXR (adrenodoxin/ferredoxin reductase) and nonheme iron-sulfur protein FDX1 or FDX2 (adrenodoxin/ferredoxin). In Ovis aries (Sheep), this protein is Cholesterol side-chain cleavage enzyme, mitochondrial.